The primary structure comprises 349 residues: Probable ethanolamine kinase A (349 aa).

The protein belongs to the choline/ethanolamine kinase family.

The protein resides in the cytoplasm. The catalysed reaction is ethanolamine + ATP = phosphoethanolamine + ADP + H(+). Its pathway is phospholipid metabolism; phosphatidylethanolamine biosynthesis; phosphatidylethanolamine from ethanolamine: step 1/3. Highly specific for ethanolamine phosphorylation. May be a rate-controlling step in phosphatidylethanolamine biosynthesis. In Dictyostelium discoideum (Social amoeba), this protein is Probable ethanolamine kinase A (etnkA).